Reading from the N-terminus, the 648-residue chain is Acyl-CoA-binding domain-containing protein 5 (648 aa).

An ACB domain is found at 13–107; it reads YPERFYAAAS…LEEADPGWYP (95 aa). Residues K34, 49-53, and K75 contribute to the an acyl-CoA site; that span reads YTLHQ. 6 Kelch repeats span residues 196 to 244, 256 to 306, 307 to 357, 359 to 408, 409 to 457, and 464 to 509; these read KMYM…KLTH, QLLS…LVGK, SLVI…VHAE, YLLI…TIGE, NWYI…LVVS, and IVVA…AVNN. A Phosphoserine modification is found at S517. Residues 520-632 are a coiled coil; that stretch reads KVEGKADRII…AATMNAKRQS (113 aa). The span at 625 to 634 shows a compositional bias: polar residues; that stretch reads TMNAKRQSSG. The segment at 625 to 648 is disordered; the sequence is TMNAKRQSSGGVWGWLAGTPPPKT.

This sequence belongs to the ACBP family. As to expression, expressed in roots, stems, leaves, flowers and siliques.

Its subcellular location is the cytoplasm. In terms of biological role, binds medium- and long-chain acyl-CoA esters with very high affinity. Can interact in vitro with oleoyl-CoA, barely with palmitoyl-CoA, but not with arachidonyl-CoA. May function as an intracellular carrier of acyl-CoA esters. The chain is Acyl-CoA-binding domain-containing protein 5 (ACBP5) from Arabidopsis thaliana (Mouse-ear cress).